The chain runs to 286 residues: Cysteine-rich repeat secretory protein 57 (286 aa).

Residues 1-20 (METTKKLSVLLCLFFTMNQA) form the signal peptide. Residues 21–265 (ISESDSDEHM…PSRSGSFSIR (245 aa)) are Extracellular-facing. Gnk2-homologous domains follow at residues 29–131 (HMAT…DKFF) and 137–247 (TKPN…TSNS). 10 N-linked (GlcNAc...) asparagine glycosylation sites follow: Asn-35, Asn-40, Asn-44, Asn-60, Asn-69, Asn-90, Asn-100, Asn-108, Asn-209, and Asn-246. The helical transmembrane segment at 266–284 (GNNKILVGMILAVSVFAFL) threads the bilayer. Over 285–286 (GL) the chain is Cytoplasmic.

Belongs to the cysteine-rich repeat secretory protein family.

The protein resides in the membrane. In Arabidopsis thaliana (Mouse-ear cress), this protein is Cysteine-rich repeat secretory protein 57 (CRRSP57).